The sequence spans 193 residues: Recombination protein RecR (193 aa).

Residues 61 to 76 form a C4-type zinc finger; it reads CASCNALSESEICEIC. Residues 84–170 enclose the Toprim domain; sequence SQLCMVLHPR…TFTKIAQGVP (87 aa).

This sequence belongs to the RecR family.

May play a role in DNA repair. It seems to be involved in an RecBC-independent recombinational process of DNA repair. It may act with RecF and RecO. This is Recombination protein RecR from Helicobacter pylori (strain Shi470).